Reading from the N-terminus, the 115-residue chain is Putative membrane protein insertion efficiency factor (115 aa).

The interval 81 to 115 (DPRPGRCGCKDAGPAVSAGSTEGNPGRRTDGTDPD) is disordered. Positions 105–115 (PGRRTDGTDPD) are enriched in basic and acidic residues.

The protein belongs to the UPF0161 family.

It is found in the cell inner membrane. Its function is as follows. Could be involved in insertion of integral membrane proteins into the membrane. The chain is Putative membrane protein insertion efficiency factor from Rhodospirillum rubrum (strain ATCC 11170 / ATH 1.1.1 / DSM 467 / LMG 4362 / NCIMB 8255 / S1).